Consider the following 712-residue polypeptide: Polyribonucleotide nucleotidyltransferase (712 aa).

The Mg(2+) site is built by aspartate 493 and aspartate 499. Residues 560-619 (PRLLTFKVDPEDIGKIIGPGGKTVRGITEATGAKVDISDDGTITVSSSVGGQAEAARAMI) enclose the KH domain. The S1 motif domain maps to 629 to 697 (GQVYLGKVTR…HKGRINLTRL (69 aa)).

Belongs to the polyribonucleotide nucleotidyltransferase family. Mg(2+) serves as cofactor.

It localises to the cytoplasm. The enzyme catalyses RNA(n+1) + phosphate = RNA(n) + a ribonucleoside 5'-diphosphate. Involved in mRNA degradation. Catalyzes the phosphorolysis of single-stranded polyribonucleotides processively in the 3'- to 5'-direction. The sequence is that of Polyribonucleotide nucleotidyltransferase from Synechococcus sp. (strain JA-2-3B'a(2-13)) (Cyanobacteria bacterium Yellowstone B-Prime).